The following is a 196-amino-acid chain: MKNFIEAQIKSSIEAKEKILKDGQYIEQIQSIVEIVIQAYKLGKKVLLCGNGGSAADSQHIAAEFVSKFRLDRKALPAIALTVNTSVLTSIGNDYSYKNIFERQVEAFGKEGDVLIGISTSGNSENITLAFKKAKEIGITTIGFLGKDGGENKNYCDFPLIVPSEDTPRVQEAHIMIGHIVCDIVEKELFGEKVDE.

The SIS domain occupies 36 to 195 (VIQAYKLGKK…EKELFGEKVD (160 aa)). A substrate-binding site is contributed by 51 to 53 (NGG). Residues histidine 60 and glutamate 64 each coordinate Zn(2+). Residues glutamate 64, 93–94 (ND), 119–121 (STS), serine 124, and glutamine 171 contribute to the substrate site. Zn(2+) contacts are provided by glutamine 171 and histidine 179.

The protein belongs to the SIS family. GmhA subfamily. Zn(2+) serves as cofactor.

It is found in the cytoplasm. The enzyme catalyses 2 D-sedoheptulose 7-phosphate = D-glycero-alpha-D-manno-heptose 7-phosphate + D-glycero-beta-D-manno-heptose 7-phosphate. It functions in the pathway carbohydrate biosynthesis; D-glycero-D-manno-heptose 7-phosphate biosynthesis; D-glycero-alpha-D-manno-heptose 7-phosphate and D-glycero-beta-D-manno-heptose 7-phosphate from sedoheptulose 7-phosphate: step 1/1. In terms of biological role, catalyzes the isomerization of sedoheptulose 7-phosphate in D-glycero-D-manno-heptose 7-phosphate. The protein is Phosphoheptose isomerase of Clostridium acetobutylicum (strain ATCC 824 / DSM 792 / JCM 1419 / IAM 19013 / LMG 5710 / NBRC 13948 / NRRL B-527 / VKM B-1787 / 2291 / W).